The sequence spans 208 residues: ATP synthase subunit b (208 aa).

Positions 1–27 are cleaved as a signal peptide; sequence MVKAKKLVFKWSLLVFSFFTLSLFLVS. Cys28 carries the N-palmitoyl cysteine lipid modification. Residue Cys28 is the site of S-diacylglycerol cysteine attachment. The chain crosses the membrane as a helical span at residues 49-69; the sequence is WVFITHLLAFFILLTLMIFLF.

The protein belongs to the ATPase B chain family. As to quaternary structure, F-type ATPases have 2 components, F(1) - the catalytic core - and F(0) - the membrane proton channel. F(1) has five subunits: alpha(3), beta(3), gamma(1), delta(1), epsilon(1). F(0) has three main subunits: a(1), b(2) and c(10-14). The alpha and beta chains form an alternating ring which encloses part of the gamma chain. F(1) is attached to F(0) by a central stalk formed by the gamma and epsilon chains, while a peripheral stalk is formed by the delta and b chains.

Its subcellular location is the cell membrane. Functionally, f(1)F(0) ATP synthase produces ATP from ADP in the presence of a proton or sodium gradient. F-type ATPases consist of two structural domains, F(1) containing the extramembraneous catalytic core and F(0) containing the membrane proton channel, linked together by a central stalk and a peripheral stalk. During catalysis, ATP synthesis in the catalytic domain of F(1) is coupled via a rotary mechanism of the central stalk subunits to proton translocation. In terms of biological role, component of the F(0) channel, it forms part of the peripheral stalk, linking F(1) to F(0). The chain is ATP synthase subunit b from Mycoplasma genitalium (strain ATCC 33530 / DSM 19775 / NCTC 10195 / G37) (Mycoplasmoides genitalium).